The following is a 128-amino-acid chain: Probable 4-amino-4-deoxy-L-arabinose-phosphoundecaprenol flippase subunit ArnF (128 aa).

Residues 1–2 (MG) lie on the Cytoplasmic side of the membrane. Residues 3 to 23 (LMWGLFSVIIASVAQLSLGFA) traverse the membrane as a helical segment. At 24 to 35 (ASHLPPMTHLWD) the chain is on the periplasmic side. The chain crosses the membrane as a helical span at residues 36–56 (FIAALLAFGLDARILLLGLLG). At 57–76 (YLLSVFCWYKTLHKLALSKA) the chain is on the cytoplasmic side. The chain crosses the membrane as a helical span at residues 77–97 (YALLSMSYVLVWIASMVLPGW). The Periplasmic segment spans residues 98 to 100 (EGT). A helical membrane pass occupies residues 101 to 121 (FSLKALLGVACIMSGLMLIFL). Topologically, residues 122–128 (PTTKQRY) are cytoplasmic.

Belongs to the ArnF family. In terms of assembly, heterodimer of ArnE and ArnF.

The protein resides in the cell inner membrane. The protein operates within bacterial outer membrane biogenesis; lipopolysaccharide biosynthesis. Its function is as follows. Translocates 4-amino-4-deoxy-L-arabinose-phosphoundecaprenol (alpha-L-Ara4N-phosphoundecaprenol) from the cytoplasmic to the periplasmic side of the inner membrane. In Shigella sonnei (strain Ss046), this protein is Probable 4-amino-4-deoxy-L-arabinose-phosphoundecaprenol flippase subunit ArnF.